A 756-amino-acid polypeptide reads, in one-letter code: ATP-dependent zinc metalloprotease FtsH (756 aa).

Residues 1–44 (MGVPAGMPHPNGLQPQRKDKALAQNPNTPQKGSEAFLKKLIHSS) lie on the Cytoplasmic side of the membrane. Residues 45–65 (WFFPGAAIVVMLGFLMASFFT) traverse the membrane as a helical segment. Topologically, residues 66 to 148 (QPSRQVDTNV…SYTDQPVEHS (83 aa)) are extracellular. The chain crosses the membrane as a helical span at residues 149–169 (FLGSLVSLLLPILLFGVLFWF). Over 170–756 (LMGRVGGGSS…NQNGAENERG (587 aa)) the chain is Cytoplasmic. 241–248 (GPPGTGKT) contributes to the ATP binding site. H463 contributes to the Zn(2+) binding site. E464 is a catalytic residue. Residues H467 and D539 each contribute to the Zn(2+) site. Basic and acidic residues-rich tracts occupy residues 647–662 (PERE…ERTD) and 672–681 (LAKEAEKSEE). The interval 647-756 (PEREHWYSKP…NQNGAENERG (110 aa)) is disordered. Low complexity-rich tracts occupy residues 684 to 703 (AEAP…VPVA) and 713 to 724 (PLTDPDADPTVA). The segment covering 744 to 756 (GTPNQNGAENERG) has biased composition (polar residues).

This sequence in the central section; belongs to the AAA ATPase family. It in the C-terminal section; belongs to the peptidase M41 family. In terms of assembly, homohexamer. The cofactor is Zn(2+).

It is found in the cell membrane. In terms of biological role, acts as a processive, ATP-dependent zinc metallopeptidase for both cytoplasmic and membrane proteins. Plays a role in the quality control of integral membrane proteins. The chain is ATP-dependent zinc metalloprotease FtsH from Rothia mucilaginosa (strain DY-18) (Stomatococcus mucilaginosus).